A 368-amino-acid chain; its full sequence is DNA replication and repair protein RecF (368 aa).

An ATP-binding site is contributed by 30–37 (GDNGAGKT).

It belongs to the RecF family.

The protein localises to the cytoplasm. Its function is as follows. The RecF protein is involved in DNA metabolism; it is required for DNA replication and normal SOS inducibility. RecF binds preferentially to single-stranded, linear DNA. It also seems to bind ATP. The protein is DNA replication and repair protein RecF of Xanthomonas campestris pv. campestris (strain 8004).